The sequence spans 57 residues: Small ribosomal subunit protein eS27 (57 aa).

4 residues coordinate Zn(2+): Cys10, Cys13, Cys29, and Cys32. The segment at 10-32 (CPDCENEQSLFEKAASEVSCAVC) adopts a C4-type zinc-finger fold.

Belongs to the eukaryotic ribosomal protein eS27 family. In terms of assembly, part of the 30S ribosomal subunit. Requires Zn(2+) as cofactor.

This Haloarcula marismortui (strain ATCC 43049 / DSM 3752 / JCM 8966 / VKM B-1809) (Halobacterium marismortui) protein is Small ribosomal subunit protein eS27.